The following is a 457-amino-acid chain: MQKYTSEARQLLALRIPVILAQVAQTAMGFVDTVMAGGYSATDMAAVAIGTSIWLPAILFGHGLLLALTPVIAQLNGSGRRERIAHQVRQGFWLAGFVSVLVMIVLWNAGYIIRSMHNIDPALADKAVGYLRALLWGAPGYLFFQVARNQCEGLAKTKPGMVMGFLGLLVNIPVNYIFIYGHFGMPELGGIGCGVATAAVYWVMFIAMLSYIKHARSMRDIRNEKGFGKPDSVVMKRLIQLGLPIALALFFEVTLFAVVALLVSPLGIVDVAGHQIALNFSSLMFVLPMSLAAAVTIRVGYRLGQGSTLDAQTAARTGLGVGICMAVVTAIFTVTLRKHIALLYNDNPEVVALAAQLMLLAAVYQISDSIQVIGSGILRGYKDTRSIFFITFTAYWVLGLPSGYILALTDLVVDRMGPAGFWMGFIIGLTSAAVLMMLRMRYLQRQPSAIILQRAAR.

The Cytoplasmic segment spans residues 1-15 (MQKYTSEARQLLALR). A helical membrane pass occupies residues 16-36 (IPVILAQVAQTAMGFVDTVMA). Over 37–52 (GGYSATDMAAVAIGTS) the chain is Extracellular. A helical transmembrane segment spans residues 53–73 (IWLPAILFGHGLLLALTPVIA). Topologically, residues 74-92 (QLNGSGRRERIAHQVRQGF) are cytoplasmic. A helical transmembrane segment spans residues 93–113 (WLAGFVSVLVMIVLWNAGYII). At 114 to 126 (RSMHNIDPALADK) the chain is on the extracellular side. Residues 127 to 147 (AVGYLRALLWGAPGYLFFQVA) traverse the membrane as a helical segment. The Cytoplasmic segment spans residues 148–159 (RNQCEGLAKTKP). Residues 160–180 (GMVMGFLGLLVNIPVNYIFIY) form a helical membrane-spanning segment. Residues 181–187 (GHFGMPE) are Extracellular-facing. Residues 188–208 (LGGIGCGVATAAVYWVMFIAM) traverse the membrane as a helical segment. The Cytoplasmic segment spans residues 209–242 (LSYIKHARSMRDIRNEKGFGKPDSVVMKRLIQLG). The helical transmembrane segment at 243 to 263 (LPIALALFFEVTLFAVVALLV) threads the bilayer. Residues 264–275 (SPLGIVDVAGHQ) are Extracellular-facing. Residues 276-296 (IALNFSSLMFVLPMSLAAAVT) form a helical membrane-spanning segment. Residues 297-313 (IRVGYRLGQGSTLDAQT) are Cytoplasmic-facing. Residues 314–334 (AARTGLGVGICMAVVTAIFTV) traverse the membrane as a helical segment. Residues 335–349 (TLRKHIALLYNDNPE) lie on the Extracellular side of the membrane. Residues 350–370 (VVALAAQLMLLAAVYQISDSI) traverse the membrane as a helical segment. The Cytoplasmic portion of the chain corresponds to 371–386 (QVIGSGILRGYKDTRS). The chain crosses the membrane as a helical span at residues 387-407 (IFFITFTAYWVLGLPSGYILA). At 408–417 (LTDLVVDRMG) the chain is on the extracellular side. A helical membrane pass occupies residues 418–438 (PAGFWMGFIIGLTSAAVLMML). The Cytoplasmic portion of the chain corresponds to 439 to 457 (RMRYLQRQPSAIILQRAAR).

The protein belongs to the multi antimicrobial extrusion (MATE) (TC 2.A.66.1) family. MdtK subfamily.

It localises to the cell inner membrane. Its function is as follows. Multidrug efflux pump that functions probably as a Na(+)/drug antiporter. In Salmonella typhimurium (strain LT2 / SGSC1412 / ATCC 700720), this protein is Multidrug resistance protein MdtK (mdtK).